The chain runs to 392 residues: Glycerophosphodiester phosphodiesterase GDPD5 (392 aa).

The N-terminal stretch at 1–21 (MILTRCLPLIWLSLLTVCAAG) is a signal peptide. A GP-PDE domain is found at 44 to 362 (PYNIAHRGSN…DFTGSLHNFQ (319 aa)). N-linked (GlcNAc...) asparagine glycosylation is found at Asn120, Asn239, Asn260, and Asn329.

The protein belongs to the glycerophosphoryl diester phosphodiesterase family. Expressed in roots, rosette and cauline leaves, stems, flowers and siliques.

It is found in the secreted. Its subcellular location is the cell wall. The protein localises to the vacuole. The enzyme catalyses a sn-glycero-3-phosphodiester + H2O = an alcohol + sn-glycerol 3-phosphate + H(+). This chain is Glycerophosphodiester phosphodiesterase GDPD5, found in Arabidopsis thaliana (Mouse-ear cress).